We begin with the raw amino-acid sequence, 351 residues long: Inhibin beta C chain (351 aa).

Residues 1–18 (MASSLLLALLFLTLATVV) form the signal peptide. Residues 19 to 236 (NLKTDGPCPA…EGKHRVRRRG (218 aa)) constitute a propeptide that is removed on maturation. N-linked (GlcNAc...) asparagine glycosylation is found at Asn110, Asn142, and Asn160. Intrachain disulfides connect Cys239/Cys247, Cys246/Cys316, Cys275/Cys348, and Cys279/Cys350.

This sequence belongs to the TGF-beta family. Homodimeric or heterodimeric through association with alpha and beta subunits, linked by one or more disulfide bonds. Inhibins are heterodimers of one alpha and one beta subunit. Activins are homo- or heterodimers of beta subunits only.

It localises to the secreted. Functionally, inhibins and activins inhibit and activate, respectively, the secretion of follitropin by the pituitary gland. Inhibins/activins are involved in regulating a number of diverse functions such as hypothalamic and pituitary hormone secretion, gonadal hormone secretion, germ cell development and maturation, erythroid differentiation, insulin secretion, nerve cell survival, embryonic axial development or bone growth, depending on their subunit composition. Inhibins appear to oppose the functions of activins. This chain is Inhibin beta C chain (Inhbc), found in Rattus norvegicus (Rat).